Here is a 199-residue protein sequence, read N- to C-terminus: Octanoyltransferase (199 aa).

Residues 27–199 (SNSYDELWLL…FVQYFLTQFK (173 aa)) enclose the BPL/LPL catalytic domain. Residues 66-73 (RGGQVTYH), 133-135 (SIG), and 146-148 (GIA) each bind substrate. C164 serves as the catalytic Acyl-thioester intermediate.

The protein belongs to the LipB family.

The protein resides in the cytoplasm. It carries out the reaction octanoyl-[ACP] + L-lysyl-[protein] = N(6)-octanoyl-L-lysyl-[protein] + holo-[ACP] + H(+). The protein operates within protein modification; protein lipoylation via endogenous pathway; protein N(6)-(lipoyl)lysine from octanoyl-[acyl-carrier-protein]: step 1/2. Its function is as follows. Catalyzes the transfer of endogenously produced octanoic acid from octanoyl-acyl-carrier-protein onto the lipoyl domains of lipoate-dependent enzymes. Lipoyl-ACP can also act as a substrate although octanoyl-ACP is likely to be the physiological substrate. This chain is Octanoyltransferase, found in Legionella pneumophila (strain Lens).